Here is a 593-residue protein sequence, read N- to C-terminus: NADH-quinone oxidoreductase subunit C/D 1 (593 aa).

The NADH dehydrogenase I subunit C stretch occupies residues 1–193 (MPWAKEGDLQ…DNLEGLMNYD (193 aa)). Residues 217 to 593 (AQIVLNWGPL…IDPVVGETDR (377 aa)) are NADH dehydrogenase I subunit D.

The protein in the N-terminal section; belongs to the complex I 30 kDa subunit family. It in the C-terminal section; belongs to the complex I 49 kDa subunit family. NDH-1 is composed of 13 different subunits. Subunits NuoB, CD, E, F, and G constitute the peripheral sector of the complex.

The protein resides in the cell inner membrane. The enzyme catalyses a quinone + NADH + 5 H(+)(in) = a quinol + NAD(+) + 4 H(+)(out). In terms of biological role, NDH-1 shuttles electrons from NADH, via FMN and iron-sulfur (Fe-S) centers, to quinones in the respiratory chain. The immediate electron acceptor for the enzyme in this species is believed to be ubiquinone. Couples the redox reaction to proton translocation (for every two electrons transferred, four hydrogen ions are translocated across the cytoplasmic membrane), and thus conserves the redox energy in a proton gradient. This Aquifex aeolicus (strain VF5) protein is NADH-quinone oxidoreductase subunit C/D 1 (nuoC1).